The following is a 359-amino-acid chain: 3-dehydroshikimate dehydratase (359 aa).

The protein belongs to the bacterial two-domain DSD family. As to quaternary structure, monomer.

It catalyses the reaction 3-dehydroshikimate = 3,4-dihydroxybenzoate + H2O. It participates in aromatic compound metabolism; 3,4-dihydroxybenzoate biosynthesis; 3,4-dihydroxybenzoate from 3-dehydroquinate: step 2/2. With respect to regulation, divalent cations such as Mg(2+), but also MO(2+), Mn(2+), Ba(2+), and Co(2+) activate the enzyme, whereas monovalent cations as K(+), Na(+), and NH4(+) decrease its activity slightly. In terms of biological role, 3-dehydroshikimate dehydratase; part of the qa gene cluster that mediates the catabolism of quinic acid (QA) and as such, allows the use of QA as a sole carbon source. Catalyzes the third reaction in the inducible quinic acid catabolic pathway by converting dehydroshikimate to protocatechuate. The qa cluster encodes 3 inducible enymes (qa-2, qa-3 and qa-4) catalyzing the first three reactions in the catabolism of quinic acid to protocatechuic acid (also known as 3,4-Dihydroxybenzoic acid). This chain is 3-dehydroshikimate dehydratase, found in Neurospora crassa (strain ATCC 24698 / 74-OR23-1A / CBS 708.71 / DSM 1257 / FGSC 987).